We begin with the raw amino-acid sequence, 119 residues long: Integration host factor subunit beta (119 aa).

Residues 93–119 are disordered; it reads AGGLADTQPDGDAPDQPQPTLLGLHAM. Residues 97-112 are compositionally biased toward low complexity; the sequence is ADTQPDGDAPDQPQPT.

The protein belongs to the bacterial histone-like protein family. As to quaternary structure, heterodimer of an alpha and a beta chain.

In terms of biological role, this protein is one of the two subunits of integration host factor, a specific DNA-binding protein that functions in genetic recombination as well as in transcriptional and translational control. This Bordetella petrii (strain ATCC BAA-461 / DSM 12804 / CCUG 43448) protein is Integration host factor subunit beta.